Reading from the N-terminus, the 413-residue chain is Serine hydroxymethyltransferase (413 aa).

Residues leucine 119 and 123–125 each bind (6S)-5,6,7,8-tetrahydrofolate; that span reads GHL. Lysine 228 carries the N6-(pyridoxal phosphate)lysine modification. 351-353 provides a ligand contact to (6S)-5,6,7,8-tetrahydrofolate; sequence SPF.

This sequence belongs to the SHMT family. As to quaternary structure, homodimer. Pyridoxal 5'-phosphate serves as cofactor.

It localises to the cytoplasm. It carries out the reaction (6R)-5,10-methylene-5,6,7,8-tetrahydrofolate + glycine + H2O = (6S)-5,6,7,8-tetrahydrofolate + L-serine. The protein operates within one-carbon metabolism; tetrahydrofolate interconversion. It participates in amino-acid biosynthesis; glycine biosynthesis; glycine from L-serine: step 1/1. Its function is as follows. Catalyzes the reversible interconversion of serine and glycine with tetrahydrofolate (THF) serving as the one-carbon carrier. This reaction serves as the major source of one-carbon groups required for the biosynthesis of purines, thymidylate, methionine, and other important biomolecules. Also exhibits THF-independent aldolase activity toward beta-hydroxyamino acids, producing glycine and aldehydes, via a retro-aldol mechanism. The polypeptide is Serine hydroxymethyltransferase (Anoxybacillus flavithermus (strain DSM 21510 / WK1)).